A 144-amino-acid chain; its full sequence is MTLYRLHEADLEIPDAWQDQSINIFKLPASGPAREASFVISRDASQGDAPFADYVARQLENAEKQLPGFKLHKRWDINIHGHAAVLLDYQWQREGRDLMLRQVFIERRPAVLITTLTTTPADLPHHEPAWKQAMQTLVPRPTPS.

In terms of assembly, homodimer. Two dimers interact with Tse6; this interaction is crucial for Tse6 loading onto VgrG1a.

Functionally, plays an essential role in toxin Tse6 delivery to target cells and specifically in the loading of Tse6 onto VgrG1a. This is Effector EagT6 from Pseudomonas aeruginosa (strain ATCC 15692 / DSM 22644 / CIP 104116 / JCM 14847 / LMG 12228 / 1C / PRS 101 / PAO1).